The following is a 90-amino-acid chain: Acylphosphatase (90 aa).

Residues 5–90 (SYLFNVKGKV…WQELTDFKMY (86 aa)) enclose the Acylphosphatase-like domain. Active-site residues include Arg-20 and Asn-38.

The protein belongs to the acylphosphatase family.

The enzyme catalyses an acyl phosphate + H2O = a carboxylate + phosphate + H(+). The sequence is that of Acylphosphatase (acyP) from Aliivibrio fischeri (strain ATCC 700601 / ES114) (Vibrio fischeri).